The primary structure comprises 381 residues: Alkanesulfonate monooxygenase (381 aa).

It belongs to the SsuD family. In terms of assembly, homotetramer.

The catalysed reaction is an alkanesulfonate + FMNH2 + O2 = an aldehyde + FMN + sulfite + H2O + 2 H(+). Functionally, catalyzes the desulfonation of aliphatic sulfonates. In Escherichia coli O17:K52:H18 (strain UMN026 / ExPEC), this protein is Alkanesulfonate monooxygenase.